A 633-amino-acid polypeptide reads, in one-letter code: Pescadillo homolog (633 aa).

The region spanning 321-414 is the BRCT domain; sequence RLRTLFKGLK…QLLPTNKYFL (94 aa). 2 disordered regions span residues 450 to 470 and 490 to 567; these read HAQS…DTVE and KKYG…LQAR. Ser453 and Ser457 each carry phosphoserine. Acidic residues-rich tracts occupy residues 454–470 and 498–526; these read EDES…DTVE and VNED…EELD. Basic and acidic residues predominate over residues 527–538; it reads EKEKRLLEEKQK. The span at 545-554 shows a compositional bias: basic residues; that stretch reads KVHKVNKRQV. The segment covering 555 to 564 has biased composition (basic and acidic residues); the sequence is HKAEVDEHRL. Residues 593–626 adopt a coiled-coil conformation; sequence LLRKKRRTIETDAKEAKKLAKREARKAAAAAAAA.

It belongs to the pescadillo family.

The protein localises to the nucleus. It is found in the nucleolus. The protein resides in the nucleoplasm. Required for maturation of ribosomal RNAs and formation of the large ribosomal subunit. The chain is Pescadillo homolog from Drosophila virilis (Fruit fly).